Consider the following 837-residue polypeptide: MWLSFLRPRDRFSLAELRYLTDQLRKIQIVNEANKDLVIEALRSIAEILTYGDQHDPLFFEFFMEKQVMGEFVRILRVSKTVTVSVQLLQTMSIMIQNLKSEQAIYYLFSNEYVNYLITYTFDFQHEELLSYYISFLRAVSGKLNKHTISLLLKTENDVVVSFPLYVEGIQFAFHEENMIRTAVRALTLNVYHVGDESVNDYVVSPPHTEYFSKLISFFQKQCMDLSAMVLNTLKSPSPDSGGKLFSAVDGIEDTLYYFSDVISAGIPDIGRLITDHILQHLTLPLLLPSLCSEAVNDISVDPVTSLYLLSCILRIVKIKDLANMTAATLFCPVKAFISSSLVKPNSSLAPEGLTYVNGHPDKGVTEEANQQCSSTAAGMSDDGNSHLCSEDTPKSIFNNSHMTFRETLLQYISEGDDVQAQGSLFVLATLLQTKELEESMLDAFGILPQRKQHKKLLLQSLVGEDTGEEQLFSPRNGSMRDGLSSELDWYLRRLEEQFGVCCSLPGAARCPRVHRHQVVDTLVTLLCRENISAETLWDGGWLLRQLLPYSEAEFNRKHLKMLNVSYEKCKNSLTREIKGIWPDLLIRVLLDEWRKCKRVIEAPSPQKEPKSVLLQLDRSSSNDNSVSESSFTAGERMCEVVKVFVLLHQLQIFSLGRSLPEQPPIYPPADRSETSRATRAGLDVSVPKPGTELKLVDAVPCRIAFERGKERDFSFLALSSGESGWIVLADPDNGIVRVTAPLAGCKPRIDEKHPRWLHLRIRPSTLPLLDPTKRGVYEKLKSKGLVDGRWILAFRDDESCHSAYSMVAGEIDLQCSEVERRLRPLFDLERNQLEDQ.

The FPL domain occupies 42 to 192; it reads LRSIAEILTY…AVRALTLNVY (151 aa). The tract at residues 366 to 386 is disordered; sequence TEEANQQCSSTAAGMSDDGNS. The segment covering 368-378 has biased composition (polar residues); that stretch reads EANQQCSSTAA.

Belongs to the CLEC16A/gop-1 family.

It localises to the golgi apparatus membrane. Functionally, involved in membrane trafficking and vacuole development through membrane fusion at the vacuole. Required for membrane trafficking machinery and accumulation of flavonoids in the seed coat. The chain is Protein TRANSPARENT TESTA 9 from Arabidopsis thaliana (Mouse-ear cress).